Here is a 156-residue protein sequence, read N- to C-terminus: tRNA (cytidine(34)-2'-O)-methyltransferase (156 aa).

S-adenosyl-L-methionine-binding residues include glycine 100, isoleucine 122, and serine 130.

It belongs to the class IV-like SAM-binding methyltransferase superfamily. RNA methyltransferase TrmH family. TrmL subfamily. As to quaternary structure, homodimer.

It localises to the cytoplasm. The catalysed reaction is cytidine(34) in tRNA + S-adenosyl-L-methionine = 2'-O-methylcytidine(34) in tRNA + S-adenosyl-L-homocysteine + H(+). It carries out the reaction 5-carboxymethylaminomethyluridine(34) in tRNA(Leu) + S-adenosyl-L-methionine = 5-carboxymethylaminomethyl-2'-O-methyluridine(34) in tRNA(Leu) + S-adenosyl-L-homocysteine + H(+). In terms of biological role, methylates the ribose at the nucleotide 34 wobble position in the two leucyl isoacceptors tRNA(Leu)(CmAA) and tRNA(Leu)(cmnm5UmAA). Catalyzes the methyl transfer from S-adenosyl-L-methionine to the 2'-OH of the wobble nucleotide. The sequence is that of tRNA (cytidine(34)-2'-O)-methyltransferase from Aeromonas hydrophila subsp. hydrophila (strain ATCC 7966 / DSM 30187 / BCRC 13018 / CCUG 14551 / JCM 1027 / KCTC 2358 / NCIMB 9240 / NCTC 8049).